Reading from the N-terminus, the 51-residue chain is Basic phospholipase A2 Bfon11 (51 aa).

Residues Y27, G29, and G31 each coordinate Ca(2+). C28 and C43 are oxidised to a cystine. Residue H46 is part of the active site. Position 47 (D47) interacts with Ca(2+).

The protein belongs to the phospholipase A2 family. Group II subfamily. D49 sub-subfamily. Ca(2+) serves as cofactor. As to expression, expressed by the venom gland.

It is found in the secreted. The catalysed reaction is a 1,2-diacyl-sn-glycero-3-phosphocholine + H2O = a 1-acyl-sn-glycero-3-phosphocholine + a fatty acid + H(+). Its function is as follows. Snake venom phospholipase A2 (PLA2) that impairs hemostasis. PLA2 catalyzes the calcium-dependent hydrolysis of the 2-acyl groups in 3-sn-phosphoglycerides. The chain is Basic phospholipase A2 Bfon11 from Bothrops fonsecai (Fonseca's lancehead).